Reading from the N-terminus, the 215-residue chain is Chloramphenicol acetyltransferase (215 aa).

Residue H189 is the Proton acceptor of the active site.

It belongs to the chloramphenicol acetyltransferase family. As to quaternary structure, homotrimer.

It catalyses the reaction chloramphenicol + acetyl-CoA = chloramphenicol 3-acetate + CoA. This enzyme is an effector of chloramphenicol resistance in bacteria. This Staphylococcus intermedius protein is Chloramphenicol acetyltransferase (cat).